The following is a 330-amino-acid chain: Electron transfer flavoprotein subunit alpha (330 aa).

270–298 (LYIACGISGAIQHLAGMSNSGTIVAINKN) contacts FAD.

It belongs to the ETF alpha-subunit/FixB family. In terms of assembly, heterodimer of an alpha and a beta subunit. The cofactor is FAD.

The electron transfer flavoprotein serves as a specific electron acceptor for other dehydrogenases. It transfers the electrons to the main respiratory chain via ETF-ubiquinone oxidoreductase (ETF dehydrogenase). The chain is Electron transfer flavoprotein subunit alpha (etfA) from Thermoanaerobacterium thermosaccharolyticum (strain ATCC 7956 / DSM 571 / NCIMB 9385 / NCA 3814 / NCTC 13789 / WDCM 00135 / 2032) (Clostridium thermosaccharolyticum).